We begin with the raw amino-acid sequence, 470 residues long: MAGGVTGGSAEGWSKRFEEGLHPVIERFNASISFDITLLQEDLDGSIAHARMLGECGVISLEEAAQLEGGLEKIRSEAAAGEFQPGLVDEDVHFAVERRLIALLGPVGKKLHTGRSRNDQVGTDLRLWLRRRLDDLDCELERFQNALLTQAESHRQTLIPGYTHLQRAQPLCLAHHLLAYIEMIQRDRDRLKDVRGRVNISPLGAAALAGTSVPIDRQNTAAALGFECIYANSLDAVSDRDFAVEYTAAASLVMVHLSRLAEEVIFWASEEFAFVRLSDRCATGSSLMPQKKNPDVPELVRGKCGRVFGHLQGLLTMIKGLPLAYNKDFQEDKEALFDTVRTTKDCVEAMSILMEQGLEFCSERLAAAVESDFSNATDVADYLVAKGVPFREAYQLVGAVVKRCLDEGILLCDLSLEQWQEFHSAIAEDLHEALAPKRVVAVRISEGGTGFDRVEEQLRHWRSRLDSGVS.

The protein belongs to the lyase 1 family. Argininosuccinate lyase subfamily.

It is found in the cytoplasm. The enzyme catalyses 2-(N(omega)-L-arginino)succinate = fumarate + L-arginine. The protein operates within amino-acid biosynthesis; L-arginine biosynthesis; L-arginine from L-ornithine and carbamoyl phosphate: step 3/3. The polypeptide is Argininosuccinate lyase (Prochlorococcus marinus (strain MIT 9303)).